A 407-amino-acid polypeptide reads, in one-letter code: Peptidase T (407 aa).

His82 is a Zn(2+) binding site. The active site involves Asp84. Asp143 is a Zn(2+) binding site. Glu177 serves as the catalytic Proton acceptor. Residues Glu178, Asp200, and His382 each contribute to the Zn(2+) site.

This sequence belongs to the peptidase M20B family. Requires Zn(2+) as cofactor.

It is found in the cytoplasm. It catalyses the reaction Release of the N-terminal residue from a tripeptide.. Its function is as follows. Cleaves the N-terminal amino acid of tripeptides. The chain is Peptidase T from Streptococcus pyogenes serotype M1.